Reading from the N-terminus, the 723-residue chain is Transcription factor E2F7 (723 aa).

A disordered region spans residues 121-146 (AEEEEEEELDDSCQYEALDESERRPS). The span at 122 to 139 (EEEEEEELDDSCQYEALD) shows a compositional bias: acidic residues. 2 consecutive DNA-binding regions follow at residues 147–216 (RKQK…VWHG) and 264–349 (RKDK…KWIG). Polar residues-rich tracts occupy residues 356–370 (SSNS…SNSG) and 395–405 (LISSAPSTPHR). Disordered stretches follow at residues 356-379 (SSNS…KMAR), 395-417 (LISS…YSRK), 489-546 (SLRK…ASFG), 650-689 (EHHG…SKSF), and 702-723 (QSAA…TAAN). Residues 494 to 503 (ERSEEDDHQT) show a composition bias toward basic and acidic residues. Residues 520 to 535 (SESLSSSTRRSPVCSP) are compositionally biased toward low complexity.

Belongs to the E2F/DP family. As to quaternary structure, homodimer and heterodimer: mainly forms homodimers and, to a lesser extent, heterodimers with e2f8.

It localises to the nucleus. Its function is as follows. Atypical E2F transcription factor that participates in various processes such as angiogenesis and polyploidization of specialized cells. Mainly acts as a transcription repressor that binds DNA independently of DP proteins and specifically recognizes the E2 recognition site 5'-TTTC[CG]CGC-3'. Directly represses transcription of classical E2F transcription factors such as e2f1. Acts as a regulator of S-phase by recognizing and binding the E2-related site 5'-TTCCCGCC-3' and mediating repression of G1/S-regulated genes. Acts as a promoter of sprouting angiogenesis, possibly by acting as a transcription activator and promoting expression of vegfa. This is Transcription factor E2F7 (e2f7) from Danio rerio (Zebrafish).